The sequence spans 166 residues: MSNEVKKNEELIEKLVSVKRHSKTVKGGRIMSFAALTVVGDGKGRIGVGRGKSREVPAAIQKAMENAKKNMVSVNLNNDTLWYPVVSNHGASKVFMQPASAGTGIIAGGAMRSVFEAVGVHNVLAKTYGSTNPANVVRATIAGLAKIKSPDEIAEKRGLSVEEIQG.

The region spanning 11–74 (LIEKLVSVKR…ENAKKNMVSV (64 aa)) is the S5 DRBM domain.

This sequence belongs to the universal ribosomal protein uS5 family. Part of the 30S ribosomal subunit. Contacts proteins S4 and S8.

With S4 and S12 plays an important role in translational accuracy. Functionally, located at the back of the 30S subunit body where it stabilizes the conformation of the head with respect to the body. In Francisella tularensis subsp. holarctica (strain LVS), this protein is Small ribosomal subunit protein uS5.